The sequence spans 106 residues: CRISPR-associated endoribonuclease Cas2 (106 aa).

Aspartate 22 lines the Mg(2+) pocket.

It belongs to the CRISPR-associated endoribonuclease Cas2 protein family. Homodimer, forms a heterotetramer with a Cas1 homodimer. Requires Mg(2+) as cofactor.

CRISPR (clustered regularly interspaced short palindromic repeat), is an adaptive immune system that provides protection against mobile genetic elements (viruses, transposable elements and conjugative plasmids). CRISPR clusters contain sequences complementary to antecedent mobile elements and target invading nucleic acids. CRISPR clusters are transcribed and processed into CRISPR RNA (crRNA). Functions as a ssRNA-specific endoribonuclease. Involved in the integration of spacer DNA into the CRISPR cassette. The protein is CRISPR-associated endoribonuclease Cas2 of Fusobacterium nucleatum subsp. nucleatum (strain ATCC 25586 / DSM 15643 / BCRC 10681 / CIP 101130 / JCM 8532 / KCTC 2640 / LMG 13131 / VPI 4355).